The chain runs to 357 residues: tRNA-specific 2-thiouridylase MnmA (357 aa).

Residues 10 to 17 and isoleucine 36 each bind ATP; that span reads GISGGVDS. Cysteine 98 serves as the catalytic Nucleophile. Cysteines 98 and 194 form a disulfide. Position 122 (glycine 122) interacts with ATP. The tract at residues 144-146 is interaction with tRNA; sequence KDQ. The active-site Cysteine persulfide intermediate is cysteine 194. Positions 303–304 are interaction with tRNA; sequence RY.

This sequence belongs to the MnmA/TRMU family.

It localises to the cytoplasm. The enzyme catalyses S-sulfanyl-L-cysteinyl-[protein] + uridine(34) in tRNA + AH2 + ATP = 2-thiouridine(34) in tRNA + L-cysteinyl-[protein] + A + AMP + diphosphate + H(+). Catalyzes the 2-thiolation of uridine at the wobble position (U34) of tRNA, leading to the formation of s(2)U34. The protein is tRNA-specific 2-thiouridylase MnmA of Chlorobium phaeovibrioides (strain DSM 265 / 1930) (Prosthecochloris vibrioformis (strain DSM 265)).